A 1348-amino-acid polypeptide reads, in one-letter code: Vascular endothelial growth factor receptor 2 (1348 aa).

The signal sequence occupies residues 1 to 20 (MELGPLRVLTVLLCLAPVFA). Residues 21–756 (GLFISMDQPT…GAEEKTNLEL (736 aa)) are Extracellular-facing. N-linked (GlcNAc...) asparagine glycosylation is found at Asn43, Asn47, Asn63, Asn93, Asn138, Asn153, Asn201, Asn240, Asn290, Asn310, Asn365, Asn386, Asn513, Asn556, Asn603, Asn613, Asn622, Asn666, Asn688, and Asn710. Ig-like C2-type domains lie at 43–106 (NDTL…GDSQ), 138–202 (NKTV…IDNE), 220–312 (DLTM…KNSS), 320–405 (PFIH…HTFT), 412–534 (PQIG…RVIS), 540–651 (GLEI…KHLT), and 658–744 (PRLV…AFFS). Cysteines 50 and 100 form a disulfide. Cysteines 145 and 195 form a disulfide. An intrachain disulfide couples Cys241 to Cys299. Cys436 and Cys520 form a disulfide bridge. Cys561 and Cys633 are disulfide-bonded. A disulfide bridge connects residues Cys679 and Cys728. The helical transmembrane segment at 757-777 (IILVGTAVIAMFFWLLLVIIL) threads the bilayer. The Cytoplasmic portion of the chain corresponds to 778–1348 (RTVKRANGGD…SPAPVASLPL (571 aa)). In terms of domain architecture, Protein kinase spans 825–1155 (LKLGKPLGRG…FSELVEHLGN (331 aa)). Residues 831–839 (LGRGAFGQV) and Lys859 each bind ATP. Residues 958 to 967 (ITSSQSSTSS) are compositionally biased toward low complexity. The segment at 958–983 (ITSSQSSTSSGFVEERSLSDVEEEDA) is disordered. The active-site Proton acceptor is the Asp1021. Phosphotyrosine; by autocatalysis occurs at positions 1047, 1052, 1168, and 1207. The disordered stretch occupies residues 1280–1302 (PSKSNESVMSEASNQTSGYQSGY).

It belongs to the protein kinase superfamily. Tyr protein kinase family. CSF-1/PDGF receptor subfamily. Post-translationally, autophosphorylated on tyrosine residues upon ligand binding. Autophosphorylation occurs in trans, i.e. one subunit of the dimeric receptor phosphorylates tyrosine residues on the other subunit. In all endothelial tissues during onset of vascularization. In later development, present in lung, heart, intestine and skin.

Its subcellular location is the cell membrane. It is found in the cytoplasmic vesicle. It localises to the early endosome. The protein localises to the cell junction. The protein resides in the endoplasmic reticulum. It catalyses the reaction L-tyrosyl-[protein] + ATP = O-phospho-L-tyrosyl-[protein] + ADP + H(+). Its activity is regulated as follows. Present in an inactive conformation in the absence of bound ligand. Binding of VEGFA, VEGFC or VEGFD leads to dimerization and activation by autophosphorylation on tyrosine residues. In terms of biological role, tyrosine-protein kinase that acts as a cell-surface receptor for VEGFA, VEGFC and/or VEGFD and plays an essential role in the regulation of angiogenesis and vascular development. Promotes proliferation, survival, migration and differentiation of endothelial cells. Promotes reorganization of the actin cytoskeleton. Binding of vascular growth factors leads to the activation of several signaling cascades. Activation of PLCG1 leads to the production of the cellular signaling molecules diacylglycerol and inositol 1,4,5-trisphosphate and the activation of protein kinase C. Mediates activation of MAPK1/ERK2, MAPK3/ERK1 and the MAP kinase signaling pathway, as well as of the AKT1 signaling pathway. Mediates phosphorylation of PIK3R1, the regulatory subunit of phosphatidylinositol 3-kinase, reorganization of the actin cytoskeleton and activation of PTK2/FAK1. Required for VEGFA-mediated induction of NOS2 and NOS3, leading to the production of the signaling molecule nitric oxide (NO) by endothelial cells. The sequence is that of Vascular endothelial growth factor receptor 2 from Coturnix japonica (Japanese quail).